A 1012-amino-acid chain; its full sequence is Structural polyprotein (1012 aa).

Position 30 (aspartate 30) interacts with a divalent metal cation. Residues 514–755 form the Peptidase S50 domain; sequence ADKGYEVVAN…AGRQFHLALA (242 aa). Serine 653 functions as the Nucleophile in the catalytic mechanism. The active site involves lysine 692. The segment at 972–1012 is disordered; it reads MKHRNPRRAPPKPKPKPNAPSQRPPGRLGRWIRTVSDEDLE. Over residues 975-986 the composition is skewed to basic residues; that stretch reads RNPRRAPPKPKP. The tract at residues 1003–1012 is interaction with VP1 protein; that stretch reads IRTVSDEDLE.

As to quaternary structure, homotrimer. A central divalent metal stabilizes the VP2 trimer. Interacts with host ITGA4/ITGB1. Homodimer. Interacts (via C-terminus) with VP1 in the cytoplasm. Interacts with VP2. Specific enzymatic cleavages yield mature proteins. The capsid assembly seems to be regulated by polyprotein processing. The protease VP4 cleaves itself off the polyprotein, thus releasing pre-VP2 and VP3 within the infected cell. During capsid assembly, the C-terminus of pre-VP2 is further processed by VP4, giving rise to VP2, the external capsid protein and three small peptides that all stay closely associated with the capsid.

The protein resides in the virion. It localises to the host cytoplasm. Functionally, capsid protein VP2 self assembles to form an icosahedral capsid with a T=13 symmetry, about 70 nm in diameter, and consisting of 260 VP2 trimers. The capsid encapsulates the genomic dsRNA. VP2 is also involved in attachment and entry into the host cell by interacting with host ITGA4/ITGB1. In terms of biological role, the precursor of VP2 plays an important role in capsid assembly. First, pre-VP2 and VP2 oligomers assemble to form a procapsid. Then, the pre-VP2 intermediates may be processed into VP2 proteins by proteolytic cleavage mediated by VP4 to obtain the mature virion. The final capsid is composed of pentamers and hexamers but VP2 has a natural tendency to assemble into all-pentameric structures. Therefore pre-VP2 may be required to allow formation of the hexameric structures. Protease VP4 is a serine protease that cleaves the polyprotein into its final products. Pre-VP2 is first partially cleaved, and may be completely processed by VP4 upon capsid maturation. Its function is as follows. Capsid protein VP3 plays a key role in virion assembly by providing a scaffold for the capsid made of VP2. May self-assemble to form a T=4-like icosahedral inner-capsid composed of at least 180 trimers. Plays a role in genomic RNA packaging by recruiting VP1 into the capsid and interacting with the dsRNA genome segments to form a ribonucleoprotein complex. Additionally, the interaction of the VP3 C-terminal tail with VP1 removes the inherent structural blockade of the polymerase active site. Thus, VP3 can also function as a transcriptional activator. Functionally, structural peptide 1 is a small peptide derived from pre-VP2 C-terminus. It destabilizes and perforates cell membranes, suggesting a role during entry. In terms of biological role, structural peptide 2 is a small peptide derived from pVP2 C-terminus. It is not essential for the virus viability, but viral growth is affected when missing. Structural peptide 3 is a small peptide derived from pVP2 C-terminus. It is not essential for the virus viability, but viral growth is affected when missing. Its function is as follows. Structural peptide 4 is a small peptide derived from pVP2 C-terminus. It is essential for the virus viability. This Gallus gallus (Chicken) protein is Structural polyprotein.